The following is a 407-amino-acid chain: 12S rRNA N(4)-cytidine methyltransferase METTL15 (407 aa).

S-adenosyl-L-methionine contacts are provided by residues 100-102, D119, F146, D169, and Q176; that span reads GGH. The residue at position 358 (S358) is a Phosphoserine.

This sequence belongs to the methyltransferase superfamily. RsmH family.

It localises to the mitochondrion matrix. It catalyses the reaction cytidine(839) in 12S rRNA + S-adenosyl-L-methionine = N(4)-methylcytidine(839) in 12S rRNA + S-adenosyl-L-homocysteine + H(+). Its function is as follows. N4-methylcytidine (m4C) methyltransferase responsible for the methylation of position C839 in mitochondrial 12S rRNA. Involved in the stabilization of 12S rRNA folding, therefore facilitating the assembly of the mitochondrial small ribosomal subunits. The sequence is that of 12S rRNA N(4)-cytidine methyltransferase METTL15 from Homo sapiens (Human).